A 340-amino-acid chain; its full sequence is MSELEQLRQEAEQLRNQIQDARKACNDATLVQITSNMDSVGRIQMRTRRTLRGHLAKIYAMHWGYDSRLLVSASQDGKLIIWDSYTTNKMHAIPLRSSWVMTCAYAPSGNYVACGGLDNICSIYNLKTREGNVRVSRELPGHTGYLSCCRFLDDSQIVTSSGDTTCALWDIETAQQTTTFTGHSGDVMSLSLSPDMRTFVSGACDASSKLWDIRDGMCRQSFTGHVSDINAVSFFPNGYAFATGSDDATCRLFDLRADQELLLYSHDNIICGITSVAFSKSGRLLLAGYDDFNCNVWDTLKGDRAGVLAGHDNRVSCLGVTDDGMAVATGSWDSFLRIWN.

N-acetylserine is present on serine 2. A Phosphoserine modification is found at serine 2. WD repeat units lie at residues 53-92 (GHLA…KMHA), 95-134 (LRSS…GNVR), 141-179 (GHTG…QTTT), 182-221 (GHSG…CRQS), and 224-263 (GHVS…ELLL). At histidine 266 the chain carries Phosphohistidine. WD repeat units lie at residues 268–307 (NIIC…RAGV) and 310–339 (GHDN…LRIW).

It belongs to the WD repeat G protein beta family. As to quaternary structure, g proteins are composed of 3 units, alpha, beta and gamma. As to expression, strongly expressed in lung and placenta, whereas it is weakly expressed in brain and heart. Abundantly expressed in the axons and Schwann cells of peripheral nerves.

Its function is as follows. Guanine nucleotide-binding proteins (G proteins) are involved as a modulator or transducer in various transmembrane signaling systems. The beta and gamma chains are required for the GTPase activity, for replacement of GDP by GTP, and for G protein-effector interaction. The sequence is that of Guanine nucleotide-binding protein subunit beta-4 (GNB4) from Homo sapiens (Human).